A 424-amino-acid polypeptide reads, in one-letter code: Putative chloroquine resistance transporter (424 aa).

The Cytoplasmic segment spans residues 1-56; the sequence is MTGMKKGKNKKKNVKNDERYKELDSLISNDSEIGNNSRWGGAKRICKLIGNEMRNN. The helical transmembrane segment at 57 to 77 threads the bilayer; it reads IYVYLLSILYLCVSVMNKVFS. Residues 78–88 are Vacuolar-facing; the sequence is KRTLNKIGNYS. N86 carries N-linked (GlcNAc...) asparagine glycosylation. The helical transmembrane segment at 89–109 threads the bilayer; sequence FVTSEVHNMICTIVFQLLYFI. The Cytoplasmic portion of the chain corresponds to 110-125; that stretch reads YRKTSNPASRNESQKN. A helical transmembrane segment spans residues 126-146; the sequence is FGWQFFLISLLDASTVIITMI. Residues 147-156 are Vacuolar-facing; it reads GLTRTTGNIQ. The helical transmembrane segment at 157–177 threads the bilayer; that stretch reads SFIMQLIIPVNMYFCFIFLGY. The Cytoplasmic portion of the chain corresponds to 178–180; it reads RYH. The helical transmembrane segment at 181 to 201 threads the bilayer; the sequence is LFNYLGAFIILITIAAVETVL. Residues 202 to 209 are Vacuolar-facing; it reads SYETQSDN. A helical transmembrane segment spans residues 210-230; sequence SIIFNLIMIFALIPLSFSNMT. Over 231 to 248 the chain is Cytoplasmic; that stretch reads REVVFKKHKINIIRLNAM. Residues 249–269 form a helical membrane-spanning segment; sequence VALFQFFTSLLVLPVYNISFL. Topologically, residues 270–317 are vacuolar; the sequence is KEIYMPFSEMGTNINDGLRCLFYGQSTIVENCGVGMVKMCDQCEGAWK. Intrachain disulfides connect C289–C312 and C301–C309. The chain crosses the membrane as a helical span at residues 318–338; that stretch reads TFITYSFFNICDNLLVCYIID. Topologically, residues 339–346 are cytoplasmic; that stretch reads KFSTMTYT. Residues 347-367 form a helical membrane-spanning segment; it reads IVSCIQGPAITIAYYFKFLAG. The Vacuolar portion of the chain corresponds to 368-377; sequence DVVRQPRLLD. A helical transmembrane segment spans residues 378 to 398; that stretch reads FLTLFGYLLGTIIYRIGNIIL. The Cytoplasmic segment spans residues 399–424; that stretch reads EKKKMLKALNTDGSEAELTSIETSTA.

It belongs to the CRT-like transporter family.

The protein resides in the vacuole membrane. Its function is as follows. Nutrient transporter. Involved in maintaining the osmotic homeostasis of the digestive vacuole. This Plasmodium chabaudi protein is Putative chloroquine resistance transporter.